Here is a 385-residue protein sequence, read N- to C-terminus: Succinyl-diaminopimelate desuccinylase (385 aa).

Position 73 (H73) interacts with Zn(2+). D75 is a catalytic residue. Residue D106 participates in Zn(2+) binding. The active-site Proton acceptor is E141. Zn(2+) is bound by residues E142, E170, and H359.

The protein belongs to the peptidase M20A family. DapE subfamily. As to quaternary structure, homodimer. Requires Zn(2+) as cofactor. Co(2+) is required as a cofactor.

The catalysed reaction is N-succinyl-(2S,6S)-2,6-diaminopimelate + H2O = (2S,6S)-2,6-diaminopimelate + succinate. The protein operates within amino-acid biosynthesis; L-lysine biosynthesis via DAP pathway; LL-2,6-diaminopimelate from (S)-tetrahydrodipicolinate (succinylase route): step 3/3. In terms of biological role, catalyzes the hydrolysis of N-succinyl-L,L-diaminopimelic acid (SDAP), forming succinate and LL-2,6-diaminopimelate (DAP), an intermediate involved in the bacterial biosynthesis of lysine and meso-diaminopimelic acid, an essential component of bacterial cell walls. The polypeptide is Succinyl-diaminopimelate desuccinylase (Methylorubrum extorquens (strain CM4 / NCIMB 13688) (Methylobacterium extorquens)).